Consider the following 496-residue polypeptide: E1B 55 kDa protein (496 aa).

A disordered region spans residues 1–74; the sequence is MERRNPSERG…EPESRPGPSG (74 aa). Residues 45 to 61 show a composition bias toward low complexity; it reads GGAAAAAGGSQAAAAGA. 2 positions are modified to phosphoserine: S490 and S491. Phosphothreonine is present on T495.

This sequence belongs to the adenoviridae E1B 55 kDa protein family. In terms of assembly, interacts with host PML-4 and PML-5; this interaction promotes efficient subnuclear targeting of E1B-55K to PML nuclear bodies. Interacts with E4-ORF3 protein. Interacts with E4-ORF6 protein. Phosphorylation at the C-terminus affects the subcellular location.

The protein localises to the host nucleus. It localises to the host cytoplasm. Plays a major role to prevent cellular inhibition of viral genome replication. Assembles an SCF-like E3 ubiquitin ligase complex based on the cellular proteins ELOB, ELOC, CUL5 and RBX1, in cooperation with viral E4orf6. This viral RING-type ligase ubiquitinates cellular substrates and targets them to proteasomal degradation: TP53/p53, LIG4, MRE11-RAD50-NBS1 (MRN) complex, ITGA3, DAXX and BLM. E1B-55K probably acts as the substrate-specific adapter of the SCF-like E3 ubiquitin ligase complex. Degradation of host TP53/p53 activity is essential for preventing E1A-induced TP53 accumulation that would otherwise lead to cell apoptosis and growth arrest. E1B-55K also inactivates TP53 transcription-factor activity by binding its transactivation domain. E1B-55K also functions as a SUMO1 E3 ligase for TP53 which causes the latter to be sequestered in promyelocytic leukemia (PML) nuclear bodies thereby contributing to maximal inhibition of TP53 function. This chain is E1B 55 kDa protein, found in Homo sapiens (Human).